Here is a 312-residue protein sequence, read N- to C-terminus: Methionyl-tRNA formyltransferase (312 aa).

109-112 provides a ligand contact to (6S)-5,6,7,8-tetrahydrofolate; it reads SLLP.

Belongs to the Fmt family.

The catalysed reaction is L-methionyl-tRNA(fMet) + (6R)-10-formyltetrahydrofolate = N-formyl-L-methionyl-tRNA(fMet) + (6S)-5,6,7,8-tetrahydrofolate + H(+). Its function is as follows. Attaches a formyl group to the free amino group of methionyl-tRNA(fMet). The formyl group appears to play a dual role in the initiator identity of N-formylmethionyl-tRNA by promoting its recognition by IF2 and preventing the misappropriation of this tRNA by the elongation apparatus. In Geotalea daltonii (strain DSM 22248 / JCM 15807 / FRC-32) (Geobacter daltonii), this protein is Methionyl-tRNA formyltransferase.